Reading from the N-terminus, the 183-residue chain is Pyruvoyl-dependent arginine decarboxylase 2 (183 aa).

S41 carries the pyruvic acid (Ser) modification.

This sequence belongs to the PdaD family. Requires pyruvate as cofactor.

The catalysed reaction is L-arginine + H(+) = agmatine + CO2. The chain is Pyruvoyl-dependent arginine decarboxylase 2 (pdaD2) from Methanosarcina acetivorans (strain ATCC 35395 / DSM 2834 / JCM 12185 / C2A).